A 239-amino-acid chain; its full sequence is Protein Thf1 (239 aa).

The stretch at 183–221 forms a coiled coil; that stretch reads ERVRKDLELYRSSLDRMKQARAVVEEMVKAARRQQERRQ. Residues 211–221 show a composition bias toward basic and acidic residues; it reads KAARRQQERRQ. A disordered region spans residues 211–239; it reads KAARRQQERRQSAASLPETSLGDPSKPGS.

This sequence belongs to the THF1 family.

Functionally, may be involved in photosynthetic membrane biogenesis. The chain is Protein Thf1 from Synechococcus sp. (strain JA-2-3B'a(2-13)) (Cyanobacteria bacterium Yellowstone B-Prime).